The chain runs to 702 residues: Protein sepa-1 (702 aa).

Residues 39–160 (RQRFCYEKTD…KESTSYGQFR (122 aa)) are required for self-association and interaction with pgl-3. 3 consecutive short sequence motifs (LIR) follow at residues 107-110 (FVEV), 247-250 (FQKI), and 298-301 (FGFV). Residues 450-471 (AKDPEEPTTAASEGGNTYGYQE) form a disordered region. Residues 458 to 468 (TAASEGGNTYG) are compositionally biased toward polar residues. The short motif at 469 to 472 (YQEL) is the LIR 4 element. The stretch at 508-543 (AAMDKKKKRRELKSRLNKINAQIDELEKRRMERAGK) forms a coiled coil. The tract at residues 545 to 564 (QVVSSSVPSEEAAQVEAPAS) is disordered. Residues 597 to 674 (NTSKEWIVED…TVDQILKKTL (78 aa)) enclose the KIX domain. The span at 675–685 (KKDQRATEHNH) shows a compositional bias: basic and acidic residues. Residues 675-702 (KKDQRATEHNHQQPTQSSDELAKNHEKN) are disordered.

In terms of assembly, self-associates. Interacts (via the LIR motifs) with lgg-1; the interaction is direct. Interacts (via the LIR motifs) with lgg-2; the interaction is direct. Interacts with pgl-3; interaction is enhanced in the presence of RNA. Interacts with epg-2; may be modulated by prmt-1. In terms of processing, degraded by autophagy.

The protein localises to the nucleus. It is found in the cytoplasm. It localises to the cytoplasmic granule. Adapter protein that connects P-granules in somatic cells with the autophagic machinery. Association with other adapters such as epg-2 and P-granule components such as pgl-3 is required for the accumulation and degradation of P-granules by autophagy in somatic cells. This ensures exclusive localization of the P-granules in germ cells. The sequence is that of Protein sepa-1 from Caenorhabditis elegans.